The following is a 1482-amino-acid chain: MQKSPLERASVISKLFFSWPGPILRKGYRQHLKLSDIYQIPSVDSADNLSEKLEREWDRELASKKNPKLINALRRCFFWRFVFYGILLYLGEVTKAVQPLLLGRIIASYDPDNKVERSIAIYLAIGLCLLFIVRTLLLHPAIFGLHHMGMQMRIAMFSLIYKKTLKLSSRVLDKISIGQLVSLLSNNLNKFDEGLALAHFVWIAPLQVTLLMGLIWDLLQASAFCGLAFLIIVALGQAGLGRMMMKYRDKRAGKINERLVITSEMIENIQSVKAYCWEEAMEKMIENLRQIELRLTRKAAYVRYFNSAAFFFSGFFVVFLSVLPYAMLKGIILRKIFTTISFCIVLRMAVTRQFPWAVQTWYDSLGAINKIQDFLQKQEYKTLEYNLTTTDVVMENVTAFWEEGFGELFEKAKQNNNNREISNGDNSLFFSNFSLLGAPVLKDINFKIERGQLLAVAGSTGAGKTSLLMMIMGELEPSEGKIKHSGRISFCSQFSWIMPGTIKENIIFGVSYDEYRYRSVIKACQLEEDISKFAEKDNIVLGEGGITLSGGQRARISLARAVYKDADLYLLDSPFGYLDVLTEKEIFESCVCKLMANKTRILVTSKMEHLKKADKILILHEGSSYFYGTFSELQTLRPDFSSELMGYDSFDQFSAERRNSILTETLRRFSLEGDTVSWNETKKQSFKQAGEFGEKRKNSILNSINSIRKFSVVQKTPLQMNGIDEDSDEPLERRLSLVPDSEQGEAILPRSNVINTGPTFQRRRRQSVLNLMTRPSINQGQNIHRRTAASARKMSLAPQANLTEMDIYSRRLSQDSGLEISEEINEEDLKECFFDDVENMPPVTTWNTYLRYVTVHKSLIFVLIWCLVVFLAEVAVSLVVLYLLRTSSLQDKGNNTTVNANSSYGVIVTNTSSYYLLYIYVGIADSLFALAIFRGLPLVHTLIKVSKTLHHKMLRSILQAPMSTFNTLKAGRILNRFSKDIAILDDLLPLTMFDFIQLLLIVIGAVVVVSVLQPYIFLATVPVIAAFIILRAYFLHTSQQLKQLESEARSPIFTHLVTSVKGLWTLRAFGRQPYFETLFHKALNLHTANWFLYLSTLRWFQMRIEIIFVIFFIAVTFVSILTTGEGEGTIGIILTLAMNIMNTLQWAVNSSIDVDSLMRSVSRIFKFIDMPTEESKPAKSVKPPKDGQLSKVMIIENQHVKKDYNWPSGGHMTVKDLTAKYIDGGNAILENISFSISPGQRVGLLGRTGSGKSTLLSAFLRLLNTEGEIQIDGVSWDSITLQQWRKAFGVIPQKVFIFSGTFRKNLDPYEQCSDQEIWKVADEVGLRSVIEQFPGKLDFVLVDGGYVLSHGHKQLMCLARSVLSKAKILLLDEPSAHLDPITYQIIRRTLKQAFADCTVILCEHRVEAMLECQQFLVIEENTVRQYDSIQKLLNEKSLFRQAISPLDRMKLLPHRNSSRHRSRSQIAALKEETEEEVQETRL.

The Cytoplasmic segment spans residues 1–77; the sequence is MQKSPLERAS…KLINALRRCF (77 aa). A helical transmembrane segment spans residues 78–98; the sequence is FWRFVFYGILLYLGEVTKAVQ. An ABC transmembrane type-1 1 domain is found at 81–365; that stretch reads FVFYGILLYL…WAVQTWYDSL (285 aa). The Extracellular portion of the chain corresponds to 99 to 122; sequence PLLLGRIIASYDPDNKVERSIAIY. Residues 123-146 traverse the membrane as a helical segment; it reads LAIGLCLLFIVRTLLLHPAIFGLH. The Cytoplasmic segment spans residues 147–195; that stretch reads HMGMQMRIAMFSLIYKKTLKLSSRVLDKISIGQLVSLLSNNLNKFDEGL. The chain crosses the membrane as a helical span at residues 196–216; sequence ALAHFVWIAPLQVTLLMGLIW. At 217 to 222 the chain is on the extracellular side; it reads DLLQAS. Residues 223-243 form a helical membrane-spanning segment; sequence AFCGLAFLIIVALGQAGLGRM. The Cytoplasmic portion of the chain corresponds to 244–298; it reads MMKYRDKRAGKINERLVITSEMIENIQSVKAYCWEEAMEKMIENLRQIELRLTRK. A helical membrane pass occupies residues 299–319; the sequence is AAYVRYFNSAAFFFSGFFVVF. At 320–339 the chain is on the extracellular side; it reads LSVLPYAMLKGIILRKIFTT. The chain crosses the membrane as a helical span at residues 340–358; sequence ISFCIVLRMAVTRQFPWAV. The Cytoplasmic portion of the chain corresponds to 359-858; the sequence is QTWYDSLGAI…YLRYVTVHKS (500 aa). ATP is bound by residues Trp-401, Ser-434, 458–465, and Gln-493; that span reads GSTGAGKT. One can recognise an ABC transporter 1 domain in the interval 423–646; the sequence is NGDNSLFFSN…RPDFSSELMG (224 aa). Cys-524 is lipidated: S-palmitoyl cysteine. Phosphoserine is present on residues Ser-549 and Ser-660. Positions 654–831 are disordered R region; it reads SAERRNSILT…EEINEEDLKE (178 aa). Phosphoserine; by PKA is present on Ser-670. At Ser-685 the chain carries Phosphoserine. Residue Lys-687 forms a Glycyl lysine isopeptide (Lys-Gly) (interchain with G-Cter in ubiquitin) linkage. 2 positions are modified to phosphoserine: Ser-699 and Ser-711. Thr-716 carries the phosphothreonine modification. Phosphoserine occurs at positions 736, 767, 790, 795, and 813. Residues 859-879 form a helical membrane-spanning segment; sequence LIFVLIWCLVVFLAEVAVSLV. Positions 859 to 1156 constitute an ABC transmembrane type-1 2 domain; sequence LIFVLIWCLV…AVNSSIDVDS (298 aa). The Extracellular segment spans residues 880–919; the sequence is VLYLLRTSSLQDKGNNTTVNANSSYGVIVTNTSSYYLLYI. N-linked (GlcNAc...) asparagine glycosylation is found at Asn-894, Asn-895, Asn-901, and Asn-910. The discontinuously helical transmembrane segment at 920-940 threads the bilayer; that stretch reads YVGIADSLFALAIFRGLPLVH. Residues 941 to 991 are Cytoplasmic-facing; that stretch reads TLIKVSKTLHHKMLRSILQAPMSTFNTLKAGRILNRFSKDIAILDDLLPLT. The chain crosses the membrane as a helical span at residues 992–1012; that stretch reads MFDFIQLLLIVIGAVVVVSVL. Over 1013 to 1014 the chain is Extracellular; it reads QP. A helical membrane pass occupies residues 1015-1035; it reads YIFLATVPVIAAFIILRAYFL. At 1036–1096 the chain is on the cytoplasmic side; it reads HTSQQLKQLE…TANWFLYLST (61 aa). Residues 1097 to 1117 form a helical membrane-spanning segment; it reads LRWFQMRIEIIFVIFFIAVTF. At 1118–1131 the chain is on the extracellular side; the sequence is VSILTTGEGEGTIG. Residues 1132–1152 form a helical membrane-spanning segment; that stretch reads IILTLAMNIMNTLQWAVNSSI. The Cytoplasmic portion of the chain corresponds to 1153-1482; it reads DVDSLMRSVS…TEEEVQETRL (330 aa). Positions 1212-1445 constitute an ABC transporter 2 domain; the sequence is MTVKDLTAKY…KSLFRQAISP (234 aa). Residues Tyr-1221 and 1246-1253 each bind ATP; that span reads GRTGSGKS. The interaction with GORASP2 stretch occupies residues 1388 to 1482; sequence RTLKQAFADC…TEEEVQETRL (95 aa). The S-palmitoyl cysteine moiety is linked to residue Cys-1397. The span at 1454 to 1463 shows a compositional bias: basic residues; that stretch reads HRNSSRHRSR. Residues 1454-1482 are disordered; that stretch reads HRNSSRHRSRSQIAALKEETEEEVQETRL. Ser-1458 is modified (phosphoserine). A compositionally biased stretch (acidic residues) spans 1472-1482; the sequence is ETEEEVQETRL. Residues 1480 to 1482 carry the PDZ-binding motif; the sequence is TRL.

The protein belongs to the ABC transporter superfamily. ABCC family. CFTR transporter (TC 3.A.1.202) subfamily. Monomer; does not require oligomerization for channel activity. May form oligomers in the membrane. Interacts with SLC26A3, SLC26A6 and NHERF1. Interacts with SHANK2. Interacts with MYO6. Interacts (via C-terminus) with GOPC (via PDZ domain); this promotes CFTR internalization and thereby decreases channel activity. Interacts with SLC4A7 through NHERF1. Found in a complex with MYO5B and RAB11A. Interacts with ANO1. Interacts with SLC26A8. Interacts with AHCYL1; the interaction increases CFTR activity. Interacts with CSE1L. The core-glycosylated form interacts with GORASP2 (via PDZ GRASP-type 1 domain) in respone to ER stress. Interacts with MARCHF2; the interaction leads to CFTR ubiqtuitination and degradation. Interacts with ADGRG2. N-glycosylated. Post-translationally, phosphorylated; cAMP treatment promotes phosphorylation and activates the channel. Dephosphorylation decreases the ATPase activity (in vitro). Phosphorylation at PKA sites activates the channel. Phosphorylation at PKC sites enhances the response to phosphorylation by PKA. Phosphorylated by AMPK; this inhibits channel activity. In terms of processing, ubiquitinated, leading to its degradation in the lysosome. Deubiquitination by USP10 in early endosomes enhances its endocytic recycling to the cell membrane. Ubiquitinated by RNF185 during ER stress. Ubiquitinated by MARCHF2.

Its subcellular location is the apical cell membrane. The protein localises to the early endosome membrane. The protein resides in the cell membrane. It is found in the recycling endosome membrane. It localises to the endoplasmic reticulum membrane. Its subcellular location is the nucleus. The enzyme catalyses ATP + H2O + closed Cl(-) channel = ADP + phosphate + open Cl(-) channel.. It carries out the reaction chloride(in) = chloride(out). The catalysed reaction is hydrogencarbonate(in) = hydrogencarbonate(out). It catalyses the reaction ATP + H2O = ADP + phosphate + H(+). Epithelial ion channel that plays an important role in the regulation of epithelial ion and water transport and fluid homeostasis. Mediates the transport of chloride ions across the cell membrane. Possesses an intrinsic ATPase activity and utilizes ATP to gate its channel; the passive flow of anions through the channel is gated by cycles of ATP binding and hydrolysis by the ATP-binding domains. The ion channel is also permeable to HCO(3)(-); selectivity depends on the extracellular chloride concentration. Exerts its function also by modulating the activity of other ion channels and transporters. Contributes to the regulation of the pH and the ion content of the epithelial fluid layer. Modulates the activity of the epithelial sodium channel (ENaC) complex, in part by regulating the cell surface expression of the ENaC complex. May regulate bicarbonate secretion and salvage in epithelial cells by regulating the transporter SLC4A7. Can inhibit the chloride channel activity of ANO1. Plays a role in the chloride and bicarbonate homeostasis during sperm epididymal maturation and capacitation. The chain is Cystic fibrosis transmembrane conductance regulator from Loxodonta africana (African elephant).